The sequence spans 209 residues: V-type ATP synthase subunit D (209 aa).

This sequence belongs to the V-ATPase D subunit family.

Its function is as follows. Produces ATP from ADP in the presence of a proton gradient across the membrane. The sequence is that of V-type ATP synthase subunit D from Thermoanaerobacter pseudethanolicus (strain ATCC 33223 / 39E) (Clostridium thermohydrosulfuricum).